A 170-amino-acid chain; its full sequence is Adenine phosphoribosyltransferase (170 aa).

Belongs to the purine/pyrimidine phosphoribosyltransferase family. As to quaternary structure, homodimer.

The protein resides in the cytoplasm. It carries out the reaction AMP + diphosphate = 5-phospho-alpha-D-ribose 1-diphosphate + adenine. It participates in purine metabolism; AMP biosynthesis via salvage pathway; AMP from adenine: step 1/1. Catalyzes a salvage reaction resulting in the formation of AMP, that is energically less costly than de novo synthesis. This is Adenine phosphoribosyltransferase from Thermotoga sp. (strain RQ2).